We begin with the raw amino-acid sequence, 138 residues long: Large ribosomal subunit protein uL14 (138 aa).

This sequence belongs to the universal ribosomal protein uL14 family. Part of the 50S ribosomal subunit. Forms a cluster with proteins L3 and L24e, part of which may contact the 16S rRNA in 2 intersubunit bridges. Contacts initiation factor aIF-6.

It is found in the cytoplasm. In terms of biological role, binds to 23S rRNA. Forms part of two intersubunit bridges in the 70S ribosome. The sequence is that of Large ribosomal subunit protein uL14 from Saccharolobus solfataricus (strain ATCC 35092 / DSM 1617 / JCM 11322 / P2) (Sulfolobus solfataricus).